The chain runs to 341 residues: Dihydroorotate dehydrogenase (quinone) (341 aa).

Residues 62–66 (AGMDK) and threonine 86 contribute to the FMN site. Lysine 66 provides a ligand contact to substrate. 111–115 (NRMGF) lines the substrate pocket. FMN contacts are provided by asparagine 139 and asparagine 172. Residue asparagine 172 participates in substrate binding. Serine 175 serves as the catalytic Nucleophile. Residue asparagine 177 coordinates substrate. 2 residues coordinate FMN: lysine 217 and threonine 245. Residue 246–247 (NT) participates in substrate binding. FMN is bound by residues glycine 268, glycine 297, and 318-319 (YS).

It belongs to the dihydroorotate dehydrogenase family. Type 2 subfamily. In terms of assembly, monomer. FMN serves as cofactor.

Its subcellular location is the cell membrane. It carries out the reaction (S)-dihydroorotate + a quinone = orotate + a quinol. It participates in pyrimidine metabolism; UMP biosynthesis via de novo pathway; orotate from (S)-dihydroorotate (quinone route): step 1/1. Functionally, catalyzes the conversion of dihydroorotate to orotate with quinone as electron acceptor. The sequence is that of Dihydroorotate dehydrogenase (quinone) from Shewanella loihica (strain ATCC BAA-1088 / PV-4).